The following is a 751-amino-acid chain: Adhesive plaque matrix protein (751 aa).

Positions 1–20 (MEGIKLNLCLLCIFTCDILG) are cleaved as a signal peptide. The tract at residues 21–41 (FSNGNIYNAHGSAYAGASAGA) is nonrepetitive linker. 55 tandem repeats follow at residues 109–118 (YKPKMTYPPT), 119–128 (YKPKPSYPPT), 129–138 (YKPKPSYPAT), 139–148 (YKSKSSYPSS), 149–158 (YKPKKTYPPT), 159–168 (YKPKLTYPPT), 169–178 (YKPKPSYPPT), 179–188 (YKPKPSYPAT), 189–198 (YKSKSSYPPS), 199–208 (YKTKKTYPSS), 209–218 (YKPKKTYPST), 219–228 (YKPKVSYPPT), 229–238 (YKSKKSYPPI), 239–248 (YKTKASYPSS), 249–258 (YKPKKTYPST), 259–268 (YKPKISYPPT), 269–278 (YKAKPSYPTS), 279–288 (YRAKPSYPST), 289–298 (YKAKPSYPPT), 299–308 (YKAKPSYPPT), 309–318 (YKAKPTYPST), 319–328 (YKAKPSYPPT), 329–338 (YKAKPSYPPT), 339–348 (YKAKPSYPPS), 349–358 (YKPKTTYPPS), 359–368 (YKPKISYPPT), 369–378 (YKAKPSYPPI), 379–388 (YKAKPSYPPT), 389–398 (YKAKPSYLPT), 399–408 (YKAKPSYPPT), 409–418 (YKAKPRYPTT), 419–428 (YKAKPSYPPT), 429–438 (YKAKPSYPPT), 439–448 (YKAKLSYPPT), 449–458 (YKAKPSYPPT), 459–468 (YKAKPSYPPT), 469–478 (YKAKPSYPPT), 479–488 (YKTKPSYPRT), 489–498 (YKAKPSYSST), 499–508 (YKAKPSYPPT), 509–518 (YKAKPSYPPT), 519–528 (YKAKPSYPPT), 529–538 (YKAKPSYPPT), 539–548 (YKAKPSYPPT), 549–558 (YKAKPSYPQT), 559–568 (YKAKSSYPPT), 569–578 (YKAKPSYPPT), 579–588 (YKAKPSYPPT), 589–598 (YKAKPSYPPT), 599–608 (YKAKPSYPPT), 609–618 (YKAKPSYPPT), 619–628 (YKAKPSYPPT), 629–638 (YKAKPSYPPT), 639–648 (YKAKPSYPPT), and 649–658 (YKAKPSYPAT). The segment at 109 to 732 (YKPKMTYPPT…YKPKPSYPPT (624 aa)) is 63 X 10 AA tandem repeats of Y-[KR]-[APTS]-K-[KPMSLTIVA]-[STR]-Y-[PLS]-[PASRQT]-[STI]. Positions 158 to 167 (TYKPKLTYPP) are enriched in low complexity. The segment at 158–359 (TYKPKLTYPP…KPKTTYPPSY (202 aa)) is disordered. Positions 168-184 (TYKPKPSYPPTYKPKPS) are enriched in pro residues. Residues 185 to 262 (YPATYKSKSS…KTYPSTYKPK (78 aa)) show a composition bias toward low complexity. Low complexity-rich tracts occupy residues 288 to 343 (TYKA…KAKP) and 350 to 359 (KPKTTYPPSY). Positions 397–636 (PTYKAKPSYP…PTYKAKPSYP (240 aa)) are disordered. The span at 444-486 (SYPPTYKAKPSYPPTYKAKPSYPPTYKAKPSYPPTYKTKPSYP) shows a compositional bias: low complexity. The stretch at 659 to 662 (YPST) is one 56; truncated repeat. Positions 660-751 (PSTYKAKPSY…KKKISYPSQY (92 aa)) are disordered. The segment covering 662-677 (TYKAKPSYPPTYKAKP) has biased composition (low complexity). A run of 7 repeats spans residues 663–672 (YKAKPSYPPT), 673–682 (YKAKPSYPPT), 683–692 (YKPKPSYPPT), 693–702 (YKSKSSYPSS), 703–712 (YKPKKTYPPT), 713–722 (YKPKLTYPPI), and 723–732 (YKPKPSYPPT). Pro residues predominate over residues 678 to 690 (SYPPTYKPKPSYP). The segment covering 691–721 (PTYKSKSSYPSSYKPKKTYPPTYKPKLTYPP) has biased composition (low complexity).

Post-translationally, hydroxylated on proline (mono- or dihydroxylation) and tyrosine residues (to L-DOPA = 3',4'-dihydroxyphenylalanine) of the tandem repeats. As to expression, produced by the byssal gland.

It is found in the secreted. Provides adhesiveness to the mussel's foot. Mussels produce one of the strongest water insoluble glues. The mussel's adhesive is a bundle of threads, called a byssus, formed by a fibrous collagenous core coated with adhesive proteins. The sequence is that of Adhesive plaque matrix protein (FP1) from Mytilus galloprovincialis (Mediterranean mussel).